Here is a 1235-residue protein sequence, read N- to C-terminus: MLLKLLQRQTYTCLSHRYGLYVCFVGVVVTIVSAFQFGEVVLEWSRDQYHVLFDSYRDNIAGKSFQNRLCLPMPIDVVYTWVNGTDLELLKELQQVREHMEEEQRAMRETLGKNTTEPTKKSEKQLECLLTHCIKVPMLVLDPPLPANCTLKDLPTLYPSFHAASDMFNVAKPKNPSTNVSVVVFDTTKDVEDAHAGPFKGGSKQMVWRAYLTTDKEAPGLVLMQGLAFLSGFPPTFKETSQLKTKLPEKLSSKIKLLRLYSEASVALLKLNNPKGFQELNKQTKKNMTIDGKELTISPAYLLWDLSAISQSKQDEDVSASRFEDNEELRYSLRSIERHAPWVRNIFIVTNGQIPSWLNLDNPRVTIVTHQDIFQNLSHLPTFSSPAIESHIHRIEGLSQKFIYLNDDVMFGKDVWPDDFYSHSKGQKVYLTWPVPNCAEGCPGSWIKDGYCDKACNNSACDWDGGDCSGNTAGNRFVAGGGGTGNIGAGQHWQFGGGINTISYCNQGCANSWLADKFCDQACNVLSCGFDAGDCGQDHFHELYKVTLLPNQTHYVVPKGEYLSYFSFANIARRGVEGTYSDNPIIRHASIANKWKTIHLIMHSGMNATTIYFNLTLQNANDEEFKIQIAVEVDTREAPKLNSTTQKAYESLVSPVTPLPQADVPFEDVPKEKRFPKIRRHDVNATGRFQEEVKIPRVNISLLPKEAQVRLSNLDLQLERGDITLKGYNLSKSALLRSFLGNSLDTKIKPQARTDETKGNLEVPQENPSHRRPHGFAGEHRSERWTAPAETVTVKGRDHALNPPPVLETNARLAQPTLGVTVSKENLSPLIVPPESHLPKEEESDRAEGNAVPVKELVPGRRLQQNYPGFLPWEKKKYFQDLLDEEESLKTQLAYFTDSKHTGRQLKDTFADSLRYVNKILNSKFGFTSRKVPAHMPHMIDRIVMQELQDMFPEEFDKTSFHKVRHSEDMQFAFSYFYYLMSAVQPLNISQVFHEVDTDQSGVLSDREIRTLATRIHDLPLSLQDLTGLEHMLINCSKMLPANITQLNNIPPTQEAYYDPNLPPVTKSLVTNCKPVTDKIHKAYKDKNKYRFEIMGEEEIAFKMIRTNVSHVVGQLDDIRKNPRKFVCLNDNIDHNHKDARTVKAVLRDFYESMFPIPSQFELPREYRNRFLHMHELQEWRAYRDKLKFWTHCVLATLIIFTIFSFFAEQIIALKRKIFPRRRIHKEASPDRIRV.

Residues Val-22–Leu-42 traverse the membrane as a helical segment. Asn-83, Asn-114, Asn-148, and Asn-179 each carry an N-linked (GlcNAc...) asparagine glycan. Disulfide bonds link Cys-438–Cys-461, Cys-452–Cys-468, Cys-505–Cys-528, and Cys-519–Cys-535. 2 LNR repeats span residues Cys-438 to Ala-473 and Cys-505 to Lys-545. The Ca(2+) site is built by Asp-449, Asp-464, Asp-467, Asp-516, Asp-531, and Asp-534. Residues Asn-614 and Asn-729 are each glycosylated (N-linked (GlcNAc...) asparagine). Positions Asn-699–Ser-823 constitute a DMAP1-binding domain. Disordered regions lie at residues Gln-751–Glu-783 and Leu-830–Asn-850. Basic and acidic residues predominate over residues His-837 to Glu-848. In terms of domain architecture, EF-hand spans Val-984–Leu-1019. Asn-988 carries an N-linked (GlcNAc...) asparagine glycan. The Ca(2+) site is built by Asp-997, Asp-999, Ser-1001, and Glu-1008. The N-linked (GlcNAc...) asparagine glycan is linked to Asn-1108. Residues Val-1194–Leu-1214 traverse the membrane as a helical segment.

This sequence belongs to the stealth family. Hexamer of two alpha, two beta and two gamma (GNPTG) subunits; disulfide-linked. The alpha and/or the beta subunits of the enzyme constitute the catalytic subunits. Interacts with LYSET; facilitates proper localization of GNPTAB. The alpha- and beta-subunits are generated by a proteolytic cleavage by MBTPS1 protease at the Lys-907-Asp-908 bond.

It localises to the golgi apparatus membrane. The catalysed reaction is N(4)-[alpha-D-mannosyl-(1-&gt;2)-alpha-D-mannosyl-(glycan)]-L-asparaginyl-[protein] + UDP-N-acetyl-alpha-D-glucosamine = N(4)-[6-(N-acetyl-alpha-D-glucosaminyl-1-phospho)-alpha-D-mannosyl-(1-&gt;2)-alpha-D-mannosyl-(glycan)]-L-asparaginyl-[protein] + UMP + H(+). Its function is as follows. Catalyzes the formation of mannose 6-phosphate (M6P) markers on high mannose type oligosaccharides in the Golgi apparatus. M6P residues are required to bind to the M6P receptors (MPR), which mediate the vesicular transport of lysosomal enzymes to the endosomal/prelysosomal compartment. The chain is N-acetylglucosamine-1-phosphotransferase subunits alpha/beta (Gnptab) from Mus musculus (Mouse).